The chain runs to 92 residues: Bombyxin A-1 (92 aa).

Residues Met1–Thr19 form the signal peptide. Gln20 bears the Pyrrolidone carboxylic acid mark. Disulfide bonds link Cys29-Cys79, Cys41-Cys92, and Cys78-Cys83. The propeptide at Ser50 to Gly70 is c peptide like.

It belongs to the insulin family. As to quaternary structure, heterodimer of a B chain and an A chain linked by two disulfide bonds.

The protein resides in the secreted. Brain peptide responsible for activation of prothoracic glands to produce ecdysone in insects. The polypeptide is Bombyxin A-1 (BBXA1) (Bombyx mori (Silk moth)).